A 335-amino-acid chain; its full sequence is Histidinol-phosphate aminotransferase (335 aa).

Lys-202 is subject to N6-(pyridoxal phosphate)lysine.

The protein belongs to the class-II pyridoxal-phosphate-dependent aminotransferase family. Histidinol-phosphate aminotransferase subfamily. Homodimer. Pyridoxal 5'-phosphate is required as a cofactor.

The enzyme catalyses L-histidinol phosphate + 2-oxoglutarate = 3-(imidazol-4-yl)-2-oxopropyl phosphate + L-glutamate. Its pathway is amino-acid biosynthesis; L-histidine biosynthesis; L-histidine from 5-phospho-alpha-D-ribose 1-diphosphate: step 7/9. This is Histidinol-phosphate aminotransferase from Thermotoga neapolitana (strain ATCC 49049 / DSM 4359 / NBRC 107923 / NS-E).